The chain runs to 360 residues: Peptide chain release factor 1 (360 aa).

An N5-methylglutamine modification is found at Q235. The segment covering 280 to 293 (DKQSHEQQAKEAAT) has biased composition (basic and acidic residues). The interval 280–300 (DKQSHEQQAKEAATRKSLIGS) is disordered.

The protein belongs to the prokaryotic/mitochondrial release factor family. Post-translationally, methylated by PrmC. Methylation increases the termination efficiency of RF1.

It localises to the cytoplasm. In terms of biological role, peptide chain release factor 1 directs the termination of translation in response to the peptide chain termination codons UAG and UAA. This chain is Peptide chain release factor 1, found in Paraburkholderia xenovorans (strain LB400).